An 86-amino-acid chain; its full sequence is Cerebrin prohormone (86 aa).

An N-terminal signal peptide occupies residues 1–27; the sequence is MFGYRSLLVLLVTLSLCLLLQSSHCSA. The propeptide occupies 28 to 64; the sequence is VRTYGNDLDARARREIISLAARLIKLSMYGPEDDSFV. Residue isoleucine 83 is modified to Isoleucine amide.

Expressed only in cerebral ganglion.

It is found in the secreted. May function as a hormone and may play a neuromodulatory role. The chain is Cerebrin prohormone (CBPH) from Aplysia californica (California sea hare).